Reading from the N-terminus, the 230-residue chain is Phosphoglycolate phosphatase (230 aa).

Aspartate 9 (nucleophile) is an active-site residue. Mg(2+) is bound by residues aspartate 9, aspartate 11, and aspartate 175.

It belongs to the HAD-like hydrolase superfamily. CbbY/CbbZ/Gph/YieH family. Mg(2+) is required as a cofactor.

It catalyses the reaction 2-phosphoglycolate + H2O = glycolate + phosphate. Its pathway is organic acid metabolism; glycolate biosynthesis; glycolate from 2-phosphoglycolate: step 1/1. In terms of biological role, specifically catalyzes the dephosphorylation of 2-phosphoglycolate. Is involved in the dissimilation of the intracellular 2-phosphoglycolate formed during the DNA repair of 3'-phosphoglycolate ends, a major class of DNA lesions induced by oxidative stress. The chain is Phosphoglycolate phosphatase from Psychrobacter arcticus (strain DSM 17307 / VKM B-2377 / 273-4).